Consider the following 919-residue polypeptide: Probable dipeptidyl-aminopeptidase B (919 aa).

Residues 1–10 show a composition bias toward basic and acidic residues; sequence MRPSDDHGET. Residues 1-50 form a disordered region; that stretch reads MRPSDDHGETSEFLPITRSRSVSAASQTSTDSSLSTESLFPGEQKPFPNV. The Cytoplasmic portion of the chain corresponds to 1-92; that stretch reads MRPSDDHGET…AATGGGRARR (92 aa). A compositionally biased stretch (low complexity) spans 21 to 38; that stretch reads SVSAASQTSTDSSLSTES. Residues 93–113 form a helical; Signal-anchor for type II membrane protein membrane-spanning segment; it reads IFWILVLLCLGGWLLAFALFL. Residues 114–919 lie on the Vacuolar side of the membrane; it reads TGGRANYQTA…MKRSLPLLYP (806 aa). Residues asparagine 200, asparagine 352, and asparagine 643 are each glycosylated (N-linked (GlcNAc...) asparagine). Serine 757 acts as the Charge relay system in catalysis. An N-linked (GlcNAc...) asparagine glycan is attached at asparagine 811. Residues aspartate 834 and histidine 867 each act as charge relay system in the active site.

It belongs to the peptidase S9B family.

The protein resides in the vacuole membrane. The catalysed reaction is Release of an N-terminal dipeptide, Xaa-Yaa-|-Zaa-, from a polypeptide, preferentially when Yaa is Pro, provided Zaa is neither Pro nor hydroxyproline.. Its function is as follows. Type IV dipeptidyl-peptidase which removes N-terminal dipeptides sequentially from polypeptides having unsubstituted N-termini provided that the penultimate residue is proline. The chain is Probable dipeptidyl-aminopeptidase B (dapB) from Neosartorya fischeri (strain ATCC 1020 / DSM 3700 / CBS 544.65 / FGSC A1164 / JCM 1740 / NRRL 181 / WB 181) (Aspergillus fischerianus).